Consider the following 1614-residue polypeptide: Protein scribble homolog (1614 aa).

The tract at residues 1 to 809 (MLKCIPLWRC…MRLWRERMVE (809 aa)) is sufficient for targeting to adherens junction and to inhibit cell proliferation. LRR repeat units follow at residues 11-34 (NRHV…IYRY), 35-58 (SRSL…FFRL), 59-81 (LNLR…VANF), 83-105 (QLVE…KFCK), 107-127 (LEIA…FTQL), 128-150 (RSLA…VGNL), 151-173 (ANLV…LSFL), 174-196 (VKLE…LGAL), 197-219 (PNLR…LGNL), 221-242 (RLVC…LGGL), 243-265 (LLLT…IGQL), 267-288 (QLSI…IGDC), 289-311 (ENLS…LGKL), 312-334 (TKLT…IGGC), 336-357 (ALSV…LAHT), 359-380 (ELHV…LTHL), and 382-405 (LKAL…DDAQ). Serine 37 carries the post-translational modification Phosphoserine. Threonine 378 bears the Phosphothreonine mark. Disordered regions lie at residues 417-441 (PQQP…SDAP), 462-608 (GAAA…RLIR), and 636-692 (AQPD…VVSA). Residues 428-437 (GLQSSPSESW) show a composition bias toward polar residues. Threonine 475 is modified (phosphothreonine). Residues 479-494 (SELKVMKRGVEERRGE) show a composition bias toward basic and acidic residues. Residues 516 to 533 (TESGLSEDSQPSTGTASQ) are compositionally biased toward polar residues. Over residues 548 to 557 (QQEAAPNAQE) the composition is skewed to low complexity. Residues 662 to 686 (EEEDEEDEEEDEEEEEVAVAEEDKE) show a composition bias toward acidic residues. A coiled-coil region spans residues 664 to 691 (EDEEDEEEDEEEEEVAVAEEDKEEAVVS). Phosphoserine occurs at positions 699 and 755. The tract at residues 708–1219 (IEPARIEEEE…SLESVSSIDR (512 aa)) is interaction with ARHGEF7. A PDZ 1 domain is found at 719–806 (TLTIVRQTGG…TVQMRLWRER (88 aa)). A required for interaction with VIM region spans residues 719 to 1184 (TLTIVRQTGG…TVLVCDGFDT (466 aa)). At threonine 817 the chain carries Phosphothreonine. Phosphoserine is present on residues serine 826, serine 866, and serine 930. The region spanning 853-941 (VACLVRSEKG…TIALLLEREA (89 aa)) is the PDZ 2 domain. The tract at residues 940–971 (EAGGPLPPSPLPHSPPPPVTAPSTVVTASPGE) is disordered. A compositionally biased stretch (pro residues) spans 944 to 959 (PLPPSPLPHSPPPPVT). A compositionally biased stretch (low complexity) spans 960-969 (APSTVVTASP). PDZ domains are found at residues 994–1083 (EICL…RRDP) and 1090–1178 (ELCI…TVLV). Serine 1130, serine 1210, serine 1213, serine 1216, serine 1222, serine 1260, serine 1268, and serine 1271 each carry phosphoserine. The disordered stretch occupies residues 1214–1448 (VSSIDRELSP…LPDRALSPAE (235 aa)). Basic and acidic residues predominate over residues 1217 to 1232 (IDRELSPEGCGKEKEP). Residue threonine 1304 is modified to Phosphothreonine. Serine 1310 is modified (phosphoserine). Basic and acidic residues predominate over residues 1315–1327 (SFRERQKYFELEV). Phosphoserine is present on serine 1340. The stretch at 1341–1368 (LVGADDLRKMQEEEARKLQQKRAQLMRE) forms a coiled coil. Basic and acidic residues predominate over residues 1345–1357 (DDLRKMQEEEARK). Acidic residues predominate over residues 1378–1390 (LDGEAPDDEEPEE). Positions 1396 to 1408 (GPAAGLSPSSPQP) are enriched in low complexity. Phosphoserine occurs at positions 1402 and 1405. The segment covering 1418–1429 (AKAERRHQERLR) has biased composition (basic and acidic residues). 3 positions are modified to phosphoserine: serine 1432, serine 1445, and serine 1467. Positions 1476 to 1524 (QMVLSKSQEGRSRRGPLERLAEAPSPAPTPSPTPVEDLGLQTSTSPGRL) are disordered. Positions 1483 to 1496 (QEGRSRRGPLERLA) are enriched in basic and acidic residues. Serine 1500 carries the post-translational modification Phosphoserine. A Phosphothreonine modification is found at threonine 1504. Residues serine 1506, serine 1520, and serine 1550 each carry the phosphoserine modification. The disordered stretch occupies residues 1581 to 1614 (GRPSPGTVGPEEVTLCSSRRPVRPGRRGLGPVPS).

Belongs to the LAP (LRR and PDZ) protein family. Interacts with UBE3A. Interacts with PAK1 and PAK2. Interacts (via PDZ domains) with VANGL2. Interacts (via PDZ domains) with LPP and TRIP6; the interaction is direct. Interacts (via PDZ domains) with TJP2. Interacts (via PDZ domains) with APC; may mediate APC targeting to adherens junctions of epithelial cells. Interacts (via PDZ domains) with TSHR; regulates TSHR trafficking and function. Interacts with ARHGEF7 and GIT1; interacts directly with ARHGEF7. Interacts with CTNNB1. Interacts with MAPK12. Interacts (via PDZ domains 1 and 3) with MCC. Interacts with DLG5. Interacts with STK4/MST1 and LATS1 in the presence of DLG5. Interacts (via PDZ domain 3) with CRTAM (via PDZ-binding motif); the interaction promotes CRTAM and SCRIB polarization in a subset of CD4+ T-cells. Interacts with YES1, when YES1 is in a closed conformation; the interaction facilitates YES1 autophosphorylation. Interacts (via PDZ domains) with VIM; the interaction protects SCRIB from proteasomal degradation and facilitates SCRIB localization to intermediate filaments, the interaction is reduced by cell contact inhibition. Post-translationally, ubiquitinated; targeted for UBE3A-dependent multiubiquitination and degraded. Palmitoylated. Could be depalmitoylated by LYPLA1 and/or LYPLA2. Palmitoylation of SCRIB by ZDHHC7 is required for its localization to cell-cell junctions, function in the establishement of epithelial cell polarity and the regulation of downstream signaling pathways important for epithelial cell differentiation.

The protein localises to the cell membrane. Its subcellular location is the cell junction. The protein resides in the adherens junction. It is found in the cell projection. It localises to the lamellipodium. The protein localises to the cytoplasm. Its subcellular location is the postsynapse. The protein resides in the presynapse. Functionally, scaffold protein involved in different aspects of polarized cell differentiation regulating epithelial and neuronal morphogenesis and T-cell polarization. Via its interaction with CRTAM, required for the late phase polarization of a subset of CD4+ T-cells, which in turn regulates TCR-mediated proliferation and IFNG and IL22 production. Plays a role in cell directional movement, cell orientation, cell sheet organization and Golgi complex polarization at the cell migration front. Promotes epithelial cell layer barrier function via maintaining cell-cell adhesion. Most probably functions in the establishment of apico-basal cell polarity. May function in cell proliferation regulating progression from G1 to S phase and as a positive regulator of apoptosis for instance during acinar morphogenesis of the mammary epithelium. May regulate cell invasion via MAPK-mediated cell migration and adhesion. May play a role in exocytosis and in the targeting of synaptic vesicles to synapses. Functions as an activator of Rac GTPase activity. The sequence is that of Protein scribble homolog from Canis lupus familiaris (Dog).